Consider the following 196-residue polypeptide: Large ribosomal subunit protein uL18 (196 aa).

This sequence belongs to the universal ribosomal protein uL18 family. Part of the 50S ribosomal subunit. Contacts the 5S and 23S rRNAs.

This is one of the proteins that bind and probably mediate the attachment of the 5S RNA into the large ribosomal subunit, where it forms part of the central protuberance. This chain is Large ribosomal subunit protein uL18, found in Desulfurococcus amylolyticus (strain DSM 18924 / JCM 16383 / VKM B-2413 / 1221n) (Desulfurococcus kamchatkensis).